We begin with the raw amino-acid sequence, 355 residues long: Glutamyl aminopeptidase (355 aa).

The a divalent metal cation site is built by His65 and Asp181. Glu213 functions as the Proton acceptor in the catalytic mechanism. The a divalent metal cation site is built by Glu214, Asp236, and His319.

This sequence belongs to the peptidase M42 family. The cofactor is a divalent metal cation.

It catalyses the reaction Release of N-terminal glutamate (and to a lesser extent aspartate) from a peptide.. This Lactococcus lactis subsp. cremoris (strain MG1363) protein is Glutamyl aminopeptidase (pepA).